The chain runs to 387 residues: Queuine tRNA-ribosyltransferase (387 aa).

Asp105 functions as the Proton acceptor in the catalytic mechanism. Residues 105-109 (DSGGF), Asp177, and Gly248 contribute to the substrate site. An RNA binding region spans residues 278 to 284 (GIGDLPS). The Nucleophile role is filled by Asp297. Residues 302–306 (TRAAR) form an RNA binding; important for wobble base 34 recognition region. Residues Cys335, Cys337, Cys340, and His366 each coordinate Zn(2+).

The protein belongs to the queuine tRNA-ribosyltransferase family. In terms of assembly, homodimer. Within each dimer, one monomer is responsible for RNA recognition and catalysis, while the other monomer binds to the replacement base PreQ1. The cofactor is Zn(2+).

It carries out the reaction 7-aminomethyl-7-carbaguanine + guanosine(34) in tRNA = 7-aminomethyl-7-carbaguanosine(34) in tRNA + guanine. Its pathway is tRNA modification; tRNA-queuosine biosynthesis. Functionally, catalyzes the base-exchange of a guanine (G) residue with the queuine precursor 7-aminomethyl-7-deazaguanine (PreQ1) at position 34 (anticodon wobble position) in tRNAs with GU(N) anticodons (tRNA-Asp, -Asn, -His and -Tyr). Catalysis occurs through a double-displacement mechanism. The nucleophile active site attacks the C1' of nucleotide 34 to detach the guanine base from the RNA, forming a covalent enzyme-RNA intermediate. The proton acceptor active site deprotonates the incoming PreQ1, allowing a nucleophilic attack on the C1' of the ribose to form the product. After dissociation, two additional enzymatic reactions on the tRNA convert PreQ1 to queuine (Q), resulting in the hypermodified nucleoside queuosine (7-(((4,5-cis-dihydroxy-2-cyclopenten-1-yl)amino)methyl)-7-deazaguanosine). This chain is Queuine tRNA-ribosyltransferase, found in Protochlamydia amoebophila (strain UWE25).